The chain runs to 318 residues: UDP-3-O-acylglucosamine N-acyltransferase (318 aa).

The active-site Proton acceptor is His-230.

The protein belongs to the transferase hexapeptide repeat family. LpxD subfamily. As to quaternary structure, homotrimer.

It carries out the reaction a UDP-3-O-[(3R)-3-hydroxyacyl]-alpha-D-glucosamine + a (3R)-hydroxyacyl-[ACP] = a UDP-2-N,3-O-bis[(3R)-3-hydroxyacyl]-alpha-D-glucosamine + holo-[ACP] + H(+). It functions in the pathway bacterial outer membrane biogenesis; LPS lipid A biosynthesis. Its function is as follows. Catalyzes the N-acylation of UDP-3-O-acylglucosamine using 3-hydroxyacyl-ACP as the acyl donor. Is involved in the biosynthesis of lipid A, a phosphorylated glycolipid that anchors the lipopolysaccharide to the outer membrane of the cell. The chain is UDP-3-O-acylglucosamine N-acyltransferase from Wolinella succinogenes (strain ATCC 29543 / DSM 1740 / CCUG 13145 / JCM 31913 / LMG 7466 / NCTC 11488 / FDC 602W) (Vibrio succinogenes).